The primary structure comprises 368 residues: Zinc finger protein 24 (368 aa).

A Glycyl lysine isopeptide (Lys-Gly) (interchain with G-Cter in SUMO2) cross-link involves residue Lys-22. Lys-27 participates in a covalent cross-link: Glycyl lysine isopeptide (Lys-Gly) (interchain with G-Cter in SUMO1); alternate. A Glycyl lysine isopeptide (Lys-Gly) (interchain with G-Cter in SUMO2); alternate cross-link involves residue Lys-27. The region spanning 52-134 is the SCAN box domain; sequence RQRFRQFGYQ…AVLEDLESEL (83 aa). Phosphoserine occurs at positions 132 and 142. Glycyl lysine isopeptide (Lys-Gly) (interchain with G-Cter in SUMO2) cross-links involve residues Lys-147, Lys-177, and Lys-236. The C2H2-type 1 zinc-finger motif lies at 251 to 273; that stretch reads HICDECGKHFSQGSALILHQRIH. The interval 251–301 is necessary and sufficient for nuclear localization; that stretch reads HICDECGKHFSQGSALILHQRIHSGEKPYGCVECGKAFSRSSILVQHQRVH. The residue at position 274 (Ser-274) is a Phosphoserine. Residues Lys-277 and Lys-286 each participate in a glycyl lysine isopeptide (Lys-Gly) (interchain with G-Cter in SUMO2) cross-link. 3 C2H2-type zinc fingers span residues 279–301, 307–329, and 335–357; these read YGCV…QRVH, YKCL…QRIH, and YECV…QRRH. At Ser-292 the chain carries Phosphoserine. Tyr-335 is subject to Phosphotyrosine. Glycyl lysine isopeptide (Lys-Gly) (interchain with G-Cter in SUMO2) cross-links involve residues Lys-361 and Lys-367.

It belongs to the krueppel C2H2-type zinc-finger protein family. Sumoylated. Widely expressed with highest levels in heart, brain, liver, skeletal muscle, kidney and testis and very low levels in spleen and lung.

It is found in the nucleus. Its function is as follows. Transcription factor required for myelination of differentiated oligodendrocytes. Required for the conversion of oligodendrocytes from the premyelinating to the myelinating state. In the developing central nervous system (CNS), involved in the maintenance in the progenitor stage by promoting the cell cycle. Specifically binds to the 5'-TCAT-3' DNA sequence. Has transcription repressor activity in vitro. In Mus musculus (Mouse), this protein is Zinc finger protein 24.